The chain runs to 213 residues: Thiamine-phosphate synthase (213 aa).

4-amino-2-methyl-5-(diphosphooxymethyl)pyrimidine is bound by residues 38 to 42 (QLREK) and Asn73. Mg(2+) is bound by residues Asp74 and Asp93. Residue Ser111 coordinates 4-amino-2-methyl-5-(diphosphooxymethyl)pyrimidine. Residue 137–139 (TTS) participates in 2-[(2R,5Z)-2-carboxy-4-methylthiazol-5(2H)-ylidene]ethyl phosphate binding. Residue Lys140 participates in 4-amino-2-methyl-5-(diphosphooxymethyl)pyrimidine binding. Residues Gly169 and 189–190 (IS) contribute to the 2-[(2R,5Z)-2-carboxy-4-methylthiazol-5(2H)-ylidene]ethyl phosphate site.

It belongs to the thiamine-phosphate synthase family. Mg(2+) is required as a cofactor.

It catalyses the reaction 2-[(2R,5Z)-2-carboxy-4-methylthiazol-5(2H)-ylidene]ethyl phosphate + 4-amino-2-methyl-5-(diphosphooxymethyl)pyrimidine + 2 H(+) = thiamine phosphate + CO2 + diphosphate. The catalysed reaction is 2-(2-carboxy-4-methylthiazol-5-yl)ethyl phosphate + 4-amino-2-methyl-5-(diphosphooxymethyl)pyrimidine + 2 H(+) = thiamine phosphate + CO2 + diphosphate. It carries out the reaction 4-methyl-5-(2-phosphooxyethyl)-thiazole + 4-amino-2-methyl-5-(diphosphooxymethyl)pyrimidine + H(+) = thiamine phosphate + diphosphate. The protein operates within cofactor biosynthesis; thiamine diphosphate biosynthesis; thiamine phosphate from 4-amino-2-methyl-5-diphosphomethylpyrimidine and 4-methyl-5-(2-phosphoethyl)-thiazole: step 1/1. Its function is as follows. Condenses 4-methyl-5-(beta-hydroxyethyl)thiazole monophosphate (THZ-P) and 2-methyl-4-amino-5-hydroxymethyl pyrimidine pyrophosphate (HMP-PP) to form thiamine monophosphate (TMP). This is Thiamine-phosphate synthase from Lysinibacillus sphaericus (strain C3-41).